Reading from the N-terminus, the 1336-residue chain is Lysine-specific demethylase 2B (1336 aa).

The segment at Met-1 to Lys-25 is disordered. Over residues Pro-15 to Lys-25 the composition is skewed to basic residues. Ser-57 carries the phosphoserine modification. Residues Phe-178–Asp-346 form the JmjC domain. Thr-239 contacts substrate. Positions 242 and 244 each coordinate Fe cation. Lys-259 lines the substrate pocket. His-314 is a Fe cation binding site. Acidic residues predominate over residues Met-410–Glu-430. Residues Met-410–Ala-465 are disordered. The span at Thr-440–Ser-451 shows a compositional bias: low complexity. Phosphoserine is present on residues Ser-474 and Ser-477. Thr-493 carries the post-translational modification Phosphothreonine. At Ser-497 the chain carries Phosphoserine. A CXXC-type zinc finger spans residues Ala-606–Ile-652. The Zn(2+) site is built by Cys-613, Cys-616, Cys-619, Cys-624, Cys-627, Cys-630, Cys-646, Cys-651, Cys-662, Cys-665, Cys-688, Cys-691, His-696, Cys-699, Cys-719, and Cys-722. Residues Thr-659–Ala-725 form a PHD-type zinc finger. Disordered regions lie at residues Lys-727–Pro-843 and Gln-855–Lys-1034. The segment covering Lys-749–His-799 has biased composition (basic and acidic residues). Over residues Ser-819–Pro-843 the composition is skewed to low complexity. Glycyl lysine isopeptide (Lys-Gly) (interchain with G-Cter in SUMO2) cross-links involve residues Lys-857 and Lys-890. Basic and acidic residues predominate over residues Pro-902–Arg-911. Basic residues predominate over residues Lys-932–Leu-941. Over residues Pro-942–Arg-960 the composition is skewed to basic and acidic residues. A coiled-coil region spans residues Asn-943–Gln-971. Ser-951 carries the phosphoserine modification. Residues Thr-961–Gln-971 are compositionally biased toward polar residues. Phosphoserine is present on residues Ser-975, Ser-979, Ser-1018, and Ser-1031. A compositionally biased stretch (low complexity) spans Pro-1014 to Ser-1024. The region spanning Asp-1059–Ile-1105 is the F-box domain. 7 LRR repeats span residues Asn-1093–Gly-1120, Trp-1133–Leu-1154, Leu-1156–Trp-1182, Gly-1222–Tyr-1247, Cys-1248–Asp-1277, Cys-1278–Tyr-1302, and Cys-1303–Ser-1336.

It belongs to the JHDM1 histone demethylase family. As to quaternary structure, interacts with SKP1, forming heterodimers. The heterodimeric KDM2B-SKP1 complex interacts with the PCGF1-BCORL1 heterodimeric complex to form a homotetrameric polycomb repression complex 1 (PRC1.1). Directly interacts with CUL1. The SKP1-KDM2B complex interacts with UBB. The cofactor is Fe(2+).

The protein resides in the nucleus. It is found in the nucleolus. It localises to the chromosome. The catalysed reaction is N(6),N(6)-dimethyl-L-lysyl(36)-[histone H3] + 2 2-oxoglutarate + 2 O2 = L-lysyl(36)-[histone H3] + 2 formaldehyde + 2 succinate + 2 CO2. With respect to regulation, histone demethylase activity is inhibited by fumarate. Histone demethylase that demethylates 'Lys-4' and 'Lys-36' of histone H3, thereby playing a central role in histone code. Preferentially demethylates trimethylated H3 'Lys-4' and dimethylated H3 'Lys-36' residue while it has weak or no activity for mono- and tri-methylated H3 'Lys-36'. Preferentially binds the transcribed region of ribosomal RNA and represses the transcription of ribosomal RNA genes which inhibits cell growth and proliferation. May also serve as a substrate-recognition component of the SCF (SKP1-CUL1-F-box protein)-type E3 ubiquitin ligase complex. The polypeptide is Lysine-specific demethylase 2B (KDM2B) (Homo sapiens (Human)).